A 550-amino-acid polypeptide reads, in one-letter code: Tyrosine-protein phosphatase 1 (550 aa).

The Tyrosine-protein phosphatase domain occupies 260–539; that stretch reads LYQKFLRLQS…KYVYDLIDSL (280 aa). 2 positions are modified to phosphoserine: S318 and S320. Residue C470 is the Phosphocysteine intermediate of the active site.

This sequence belongs to the protein-tyrosine phosphatase family. Non-receptor class subfamily.

It is found in the cytoplasm. The enzyme catalyses O-phospho-L-tyrosyl-[protein] + H2O = L-tyrosyl-[protein] + phosphate. In terms of biological role, plays a role in inhibiting the onset of mitosis. Dephosphorylates sty1/spc1 and wis1/spc2/sty2. This chain is Tyrosine-protein phosphatase 1 (pyp1), found in Schizosaccharomyces pombe (strain 972 / ATCC 24843) (Fission yeast).